The chain runs to 101 residues: CYC02 protein (101 aa).

One copy of the 1; approximate repeat lies at 42–64 (DAVCHHGCCRWFHHRCVRCCRSA). The interval 42 to 101 (DAVCHHGCCRWFHHRCVRCCRSAEEVSVSDTENNAAADAHCRHGCCRWFHGRCIRCCPSA) is 2 X approximate repeats. The stretch at 79–101 (DAHCRHGCCRWFHGRCIRCCPSA) is one 2; approximate repeat.

The protein belongs to the GRP family.

In terms of biological role, may be involved in the control of the cell cycle at the G1/S start transition. This Catharanthus roseus (Madagascar periwinkle) protein is CYC02 protein (CYC02).